A 192-amino-acid chain; its full sequence is Ribosomal RNA small subunit methyltransferase G (192 aa).

S-adenosyl-L-methionine is bound by residues G63, L68, 112 to 113 (IE), and R125.

It belongs to the methyltransferase superfamily. RNA methyltransferase RsmG family.

The protein localises to the cytoplasm. The enzyme catalyses guanosine(527) in 16S rRNA + S-adenosyl-L-methionine = N(7)-methylguanosine(527) in 16S rRNA + S-adenosyl-L-homocysteine. Functionally, specifically methylates the N7 position of guanine in position 527 of 16S rRNA. The sequence is that of Ribosomal RNA small subunit methyltransferase G from Rickettsia rickettsii (strain Iowa).